A 555-amino-acid chain; its full sequence is Phosphoglucomutase (555 aa).

Alpha-D-glucose 1,6-bisphosphate contacts are provided by arginine 22 and serine 114. The active-site Phosphoserine intermediate is serine 114. Residues serine 114, aspartate 279, aspartate 281, and aspartate 283 each contribute to the Mg(2+) site. A Phosphoserine modification is found at serine 114. Aspartate 283, arginine 284, threonine 347, glutamate 366, serine 368, and lysine 379 together coordinate alpha-D-glucose 1,6-bisphosphate.

Belongs to the phosphohexose mutase family. Monomer. Mg(2+) serves as cofactor.

Its subcellular location is the cytoplasm. It carries out the reaction alpha-D-glucose 1-phosphate = alpha-D-glucose 6-phosphate. The catalysed reaction is O-phospho-L-seryl-[protein] + alpha-D-glucose 1-phosphate = alpha-D-glucose 1,6-bisphosphate + L-seryl-[protein]. The enzyme catalyses alpha-D-glucose 1,6-bisphosphate + L-seryl-[protein] = O-phospho-L-seryl-[protein] + alpha-D-glucose 6-phosphate. Its function is as follows. Catalyzes the reversible isomerization of alpha-D-glucose 1-phosphate to alpha-D-glucose 6-phosphate. The mechanism proceeds via the intermediate compound alpha-D-glucose 1,6-bisphosphate. Key enzyme in hexose metabolism. The reverse reaction is an essential step for biosynthesis because glucose 1-phosphate is the starting point for the synthesis of UDP-glucose, which acts as a precursor for the synthesis of oligosaccharides and trehalose. This Aspergillus oryzae (strain ATCC 42149 / RIB 40) (Yellow koji mold) protein is Phosphoglucomutase (pgmA).